The sequence spans 294 residues: 2,4-diacetylphloroglucinol hydrolase (294 aa).

4 residues coordinate Zn(2+): H129, E160, H270, and E274.

Belongs to the DAPG/phloretin hydrolase family. As to quaternary structure, homodimer. Zn(2+) is required as a cofactor.

The catalysed reaction is 2,4-diacetylphloroglucinol + H2O = 2-acetylphloroglucinol + acetate. With respect to regulation, specifically and significantly activated by CoCl(2). Competitively inhibited by MAPG, but not by 2-hydroxy- and 4-hydroxyacetophenone. Its function is as follows. Hydrolase that specifically degrades the potent antimicrobial compound 2,4-diacetylphloroglucinol (DAPG) to equimolar amounts of mildly toxic monoacetylphloroglucinol (MAPG) and acetate. The polypeptide is 2,4-diacetylphloroglucinol hydrolase (Pseudomonas sp).